The sequence spans 165 residues: Phosphopantetheine adenylyltransferase (165 aa).

Threonine 9 lines the substrate pocket. Residues 9–10 and histidine 17 contribute to the ATP site; that span reads TF. Substrate is bound by residues lysine 41, leucine 78, and arginine 92. ATP-binding positions include 93 to 95, glutamate 103, and 128 to 134; these read GLR and HQAIASK.

Belongs to the bacterial CoaD family. In terms of assembly, homohexamer. The cofactor is Mg(2+).

The protein localises to the cytoplasm. The catalysed reaction is (R)-4'-phosphopantetheine + ATP + H(+) = 3'-dephospho-CoA + diphosphate. The protein operates within cofactor biosynthesis; coenzyme A biosynthesis; CoA from (R)-pantothenate: step 4/5. Its function is as follows. Reversibly transfers an adenylyl group from ATP to 4'-phosphopantetheine, yielding dephospho-CoA (dPCoA) and pyrophosphate. This Ruegeria sp. (strain TM1040) (Silicibacter sp.) protein is Phosphopantetheine adenylyltransferase.